Consider the following 426-residue polypeptide: tRNA (guanine(37)-N(1))-methyltransferase (426 aa).

S-adenosyl-L-methionine-binding positions include His-203, 242 to 243 (DL), 269 to 270 (DA), and Asn-292. Residues 374–426 (RISFKMPTLKKRKDTENNDDQENNNNSSNNNNNNKIDYNEAVSSGGEGKKIKH) are disordered. Over residues 396-407 (NNNNSSNNNNNN) the composition is skewed to low complexity.

This sequence belongs to the class I-like SAM-binding methyltransferase superfamily. TRM5/TYW2 family. Monomer.

The protein resides in the mitochondrion matrix. It localises to the nucleus. Its subcellular location is the cytoplasm. The catalysed reaction is guanosine(37) in tRNA + S-adenosyl-L-methionine = N(1)-methylguanosine(37) in tRNA + S-adenosyl-L-homocysteine + H(+). Functionally, specifically methylates the N1 position of guanosine-37 in various cytoplasmic and mitochondrial tRNAs. Methylation is not dependent on the nature of the nucleoside 5' of the target nucleoside. This is the first step in the biosynthesis of wybutosine (yW), a modified base adjacent to the anticodon of tRNAs and required for accurate decoding. This is tRNA (guanine(37)-N(1))-methyltransferase (trmt5) from Heterostelium pallidum (strain ATCC 26659 / Pp 5 / PN500) (Cellular slime mold).